The chain runs to 715 residues: Harpin secretion protein HrpI (715 aa).

Transmembrane regions (helical) follow at residues Gly-23–Ile-43, Val-45–Pro-65, Ala-69–Ile-89, Gly-115–Ile-135, Ala-203–Leu-223, Ile-241–Ile-261, and Met-298–Ile-318.

The protein belongs to the FHIPEP (flagella/HR/invasion proteins export pore) family.

Its subcellular location is the cell inner membrane. Functionally, involved in the secretion of harpin; a proteinaceous elicitor of the hypersensitivity response in plants. This chain is Harpin secretion protein HrpI (hrpI), found in Erwinia amylovora (Fire blight bacteria).